Reading from the N-terminus, the 299-residue chain is Coenzyme PQQ synthesis protein B (299 aa).

This sequence belongs to the PqqB family.

It participates in cofactor biosynthesis; pyrroloquinoline quinone biosynthesis. May be involved in the transport of PQQ or its precursor to the periplasm. The protein is Coenzyme PQQ synthesis protein B of Methylobacterium sp. (strain 4-46).